The following is a 254-amino-acid chain: MSLDFTVVIPARLRSTRLPGKPLLLIAGKPMVQHVWEQARKSGAGRVVIATDDASIVEACQAFGAEVLMTRADHESGTDRLAEVAAQLGLPADAIVVNVQGDEPLIPPVIIDQVAANLAAHPEAGIATLAEPIHDPETVFNPNAVKVVSDKNGLALSFSRAPLPWARDAFAKDRNQLPQGVPYRRHIGMYAYRVGFLQDFVSWGPCWLEQTEALEQLRALWHGVRIHVADAIEAPAVGVDTAQDLERVRRLLEA.

This sequence belongs to the KdsB family.

It is found in the cytoplasm. It catalyses the reaction 3-deoxy-alpha-D-manno-oct-2-ulosonate + CTP = CMP-3-deoxy-beta-D-manno-octulosonate + diphosphate. It participates in nucleotide-sugar biosynthesis; CMP-3-deoxy-D-manno-octulosonate biosynthesis; CMP-3-deoxy-D-manno-octulosonate from 3-deoxy-D-manno-octulosonate and CTP: step 1/1. Its pathway is bacterial outer membrane biogenesis; lipopolysaccharide biosynthesis. Its function is as follows. Activates KDO (a required 8-carbon sugar) for incorporation into bacterial lipopolysaccharide in Gram-negative bacteria. The sequence is that of 3-deoxy-manno-octulosonate cytidylyltransferase from Pseudomonas putida (strain W619).